Here is a 596-residue protein sequence, read N- to C-terminus: Nitrite reductase (596 aa).

A signal peptide spans 1–29 (MRQRTPFARPGLLASAALALVLGPLAASA). The segment at 30–76 (QEQVAPPKDPAAALEDHKTRTDNRYEPSLDNLAQQDVAAPGAPEGVS) is N-terminal tail. His-46 is a binding site for heme c. Heme d1-binding residues include Tyr-54 and Ser-57. A Cytochrome c domain is found at 77–162 (ALSDAQYNEA…ANYLLLDPAA (86 aa)). Cys-94, Cys-97, His-98, Lys-108, and Tyr-122 together coordinate heme c. Heme d1 contacts are provided by Trp-138, Arg-203, His-229, Arg-232, Arg-245, Arg-272, Tyr-292, Arg-420, Gln-536, and Thr-583. The D1-heme domain stretch occupies residues 163-596 (PPEFGMKEMR…NVYNTMTDTY (434 aa)).

Homodimer. Heme c serves as cofactor. Heme is required as a cofactor.

The protein resides in the periplasm. The enzyme catalyses nitric oxide + Fe(III)-[cytochrome c] + H2O = Fe(II)-[cytochrome c] + nitrite + 2 H(+). It carries out the reaction A + NH4(+) + H2O = hydroxylamine + AH2 + H(+). This chain is Nitrite reductase (nirS), found in Paracoccus pantotrophus (Thiosphaera pantotropha).